A 327-amino-acid chain; its full sequence is Ribonucleoside-diphosphate reductase small chain (327 aa).

Fe cation-binding residues include Asp70, Glu101, and His104. Residue Tyr108 is part of the active site. Residues Glu164, Glu198, and His201 each coordinate Fe cation.

This sequence belongs to the ribonucleoside diphosphate reductase small chain family. As to quaternary structure, heterotetramer composed of a homodimer of the large subunit (R1) and a homodimer of the small subunit (R2). Larger multisubunit protein complex are also active, composed of (R1)n(R2)n. It depends on Fe cation as a cofactor.

The catalysed reaction is a 2'-deoxyribonucleoside 5'-diphosphate + [thioredoxin]-disulfide + H2O = a ribonucleoside 5'-diphosphate + [thioredoxin]-dithiol. Ribonucleoside-diphosphate reductase holoenzyme provides the precursors necessary for viral DNA synthesis. Allows virus growth in non-dividing cells. Catalyzes the biosynthesis of deoxyribonucleotides from the corresponding ribonucleotides. In African swine fever virus (isolate Tick/South Africa/Pretoriuskop Pr4/1996) (ASFV), this protein is Ribonucleoside-diphosphate reductase small chain.